Reading from the N-terminus, the 162-residue chain is Tripartite terminase subunit 2 (162 aa).

The disordered stretch occupies residues 1-58 (MYGRSNAPGCQPPVRAHPPSSPMTSRLQLAAMEQNASDAALSGMQQARSRQASPKRLR). The segment covering 43-52 (GMQQARSRQA) has biased composition (polar residues).

This sequence belongs to the herpesviridae TRM2 protein family. Associates with TRM1 and TRM3 to form the tripartite terminase complex.

The protein localises to the host nucleus. Component of the molecular motor that translocates viral genomic DNA in empty capsid during DNA packaging. Forms a tripartite terminase complex together with TRM1 and TRM3 in the host cytoplasm. Once the complex reaches the host nucleus, it interacts with the capsid portal vertex. This portal forms a ring in which genomic DNA is translocated into the capsid. This Equine herpesvirus 1 (strain Ab4p) (EHV-1) protein is Tripartite terminase subunit 2.